The primary structure comprises 274 residues: WIMGHMVNKKYQVDEFADLGANAIEFDVTFDSNYKADYTYHKVPCDCGRTCGRYEVFTEFLSYVKNETTPGHPSFREKLVLLQLDLKMSYLTESQSNEAGKDMAKKFLNYYWNRGSNGGRAYILLSIPSIDNYLFLTGFKQQLKTEGFEQYLDKVGVDFSGNEDLDSIVNVLGRLEDEHVWQSDGITNCWTRGISRLQDAIKRRDEDESRYGIKKVYTWTVDYYPSIRYYLRLGIDGVMTNFPNRVEYILNEEEFPGSLRMATIDDNPWEKYVG.

His-5 is an active-site residue. 2 residues coordinate Mg(2+): Glu-25 and Asp-27. Residue His-41 is the Nucleophile of the active site. 2 disulfides stabilise this stretch: Cys-45/Cys-51 and Cys-47/Cys-189. Residue Asp-85 coordinates Mg(2+).

It belongs to the arthropod phospholipase D family. Class II subfamily. It depends on Mg(2+) as a cofactor. As to expression, expressed by the venom gland.

It is found in the secreted. The enzyme catalyses an N-(acyl)-sphingosylphosphocholine = an N-(acyl)-sphingosyl-1,3-cyclic phosphate + choline. It catalyses the reaction an N-(acyl)-sphingosylphosphoethanolamine = an N-(acyl)-sphingosyl-1,3-cyclic phosphate + ethanolamine. The catalysed reaction is a 1-acyl-sn-glycero-3-phosphocholine = a 1-acyl-sn-glycero-2,3-cyclic phosphate + choline. It carries out the reaction a 1-acyl-sn-glycero-3-phosphoethanolamine = a 1-acyl-sn-glycero-2,3-cyclic phosphate + ethanolamine. In terms of biological role, dermonecrotic toxins cleave the phosphodiester linkage between the phosphate and headgroup of certain phospholipids (sphingolipid and lysolipid substrates), forming an alcohol (often choline) and a cyclic phosphate. This toxin acts on sphingomyelin (SM). It may also act on ceramide phosphoethanolamine (CPE), lysophosphatidylcholine (LPC) and lysophosphatidylethanolamine (LPE), but not on lysophosphatidylserine (LPS), and lysophosphatidylglycerol (LPG). It acts by transphosphatidylation, releasing exclusively cyclic phosphate products as second products. Induces dermonecrosis, hemolysis, increased vascular permeability, edema, inflammatory response, and platelet aggregation. The chain is Dermonecrotic toxin LspiSicTox-betaIII2 from Loxosceles spinulosa (Recluse spider).